The primary structure comprises 93 residues: Small ribosomal subunit protein uS19 (93 aa).

The protein belongs to the universal ribosomal protein uS19 family.

In terms of biological role, protein S19 forms a complex with S13 that binds strongly to the 16S ribosomal RNA. The chain is Small ribosomal subunit protein uS19 from Clostridium perfringens (strain ATCC 13124 / DSM 756 / JCM 1290 / NCIMB 6125 / NCTC 8237 / Type A).